Here is a 323-residue protein sequence, read N- to C-terminus: MNQLDNLKKFSKISADTGDVDLIRTYQIQHATTNPSLILKSPLFTTYLKLFNDAIDYAQKIGGNQNTKITNASDRLIVNIGSEILANISGYISTEIDAQLSFNTDLTIKKAHKLITMYQKKNIDTSRVLIKIAATWEGIQAAEELEKSGIKCNLTLVFSFAQARACAERNIYLISPFIGRIYDWYNQRNLIKTSYINDDPGIQSIKKIYHYYKTYGYNTIIMGASFRRLEQILALSGCDYLTISPHFLKQLYQNTNSVTRQLFPPKTIISHHIPVLDQSEFFQEHNKNQMAVEKLNEGIQQFSIDQQKLHKLLLNNLNVQLQK.

Residue K131 is the Schiff-base intermediate with substrate of the active site.

Belongs to the transaldolase family. Type 1 subfamily. As to quaternary structure, homodimer.

It is found in the cytoplasm. It carries out the reaction D-sedoheptulose 7-phosphate + D-glyceraldehyde 3-phosphate = D-erythrose 4-phosphate + beta-D-fructose 6-phosphate. It participates in carbohydrate degradation; pentose phosphate pathway; D-glyceraldehyde 3-phosphate and beta-D-fructose 6-phosphate from D-ribose 5-phosphate and D-xylulose 5-phosphate (non-oxidative stage): step 2/3. Its function is as follows. Transaldolase is important for the balance of metabolites in the pentose-phosphate pathway. This is Transaldolase from Blochmanniella floridana.